The following is a 171-amino-acid chain: Small ribosomal subunit protein uS5 (171 aa).

An S5 DRBM domain is found at 14-77; the sequence is YIEKLVNIRR…DKARKAMKNV (64 aa).

It belongs to the universal ribosomal protein uS5 family. Part of the 30S ribosomal subunit. Contacts proteins S4 and S8.

Its function is as follows. With S4 and S12 plays an important role in translational accuracy. In terms of biological role, located at the back of the 30S subunit body where it stabilizes the conformation of the head with respect to the body. The protein is Small ribosomal subunit protein uS5 of Vesicomyosocius okutanii subsp. Calyptogena okutanii (strain HA).